The primary structure comprises 263 residues: Acetylglutamate kinase (263 aa).

Substrate contacts are provided by residues 48–49 (GG), R70, and N162.

It belongs to the acetylglutamate kinase family. ArgB subfamily.

It is found in the cytoplasm. The enzyme catalyses N-acetyl-L-glutamate + ATP = N-acetyl-L-glutamyl 5-phosphate + ADP. Its pathway is amino-acid biosynthesis; L-arginine biosynthesis; N(2)-acetyl-L-ornithine from L-glutamate: step 2/4. In terms of biological role, catalyzes the ATP-dependent phosphorylation of N-acetyl-L-glutamate. The protein is Acetylglutamate kinase of Vibrio vulnificus (strain CMCP6).